A 414-amino-acid chain; its full sequence is Chromobox protein homolog 6 (414 aa).

Positions 11 to 69 constitute a Chromo domain; sequence FAAESIIKRRIRKGRIEYLVKWKGWAIKYSTWEPEENILDSRLIAAFEQKERERELYGP. Serine 107 carries the phosphoserine modification. 3 disordered regions span residues 127–152, 267–308, and 344–365; these read HRMS…PISP, APFD…VPNW, and ALEP…PEMS. Positions 267–287 are enriched in low complexity; that stretch reads APFDAHSSSSSGCPSPTLQSS.

In terms of assembly, component of a PRC1-like complex. Distinct PRC1-like core complexes are composed of a RING1 subunit (RING1B or RING1A), one of the six PCGF proteins (PCGF1-6), one PHC protein (PHC1-3) and one of the CBX proteins (CBX2, CBX4, CBX6, CBX7 or CBX8). Interacts with PCGF1, PCGF2, PCGF3, BMI1, PCGF5, PCGF6, RING1 and RNF2. May interact with H3C15 and H3C1. Interacts (via chromodomain) with single-stranded RNA (ssRNA). Post-translationally, ubiquitinated. Ubiquitination regulates the function of the Polycomb group (PcG) multiprotein PRC1-like complex. Deubiquitinated by USP26. Expressed in mouse embryonic stem cells.

It localises to the nucleus. Its subcellular location is the chromosome. Component of a Polycomb group (PcG) multiprotein PRC1-like complex, a complex class required to maintain the transcriptionally repressive state of many genes, including Hox genes, throughout development. PcG PRC1 complex acts via chromatin remodeling and modification of histones; it mediates monoubiquitination of histone H2A 'Lys-119', rendering chromatin heritably changed in its expressibility. Possibly contributes to the target selectivity of the PRC1 complex by binding specific regions of chromatin. Recruitment to chromatin might occur in an H3K27me3-independent fashion. May have a PRC1-independent function in embryonic stem cells. The sequence is that of Chromobox protein homolog 6 (Cbx6) from Mus musculus (Mouse).